The following is a 168-amino-acid chain: Vitelline membrane protein Vm26Ab (168 aa).

Positions 1–23 are cleaved as a signal peptide; that stretch reads MAFNFGHLLIAGLVALSAVSSET. Positions 24 to 42 are cleaved as a propeptide — removed between stage 11 and 14 of oogenesis; the sequence is IQLQPTQGILIPAPLAENI. Positions 43–46 are essential for N-terminal propeptide removal. Potential serine protease cleavage site; the sequence is RVSR. An 8 X 8 AA approximate repeats of P-[AS]-Y-S-A-P-A-[AS] region spans residues 52–119; sequence YGAAPAAPSY…PAYSAPASIP (68 aa). The 1; half-length repeat unit spans residues 55 to 58; it reads APAA. Repeat 2 spans residues 59–66; the sequence is PSYSAPAA. The 3; approximate repeat unit spans residues 70 to 77; it reads QAYSAPAA. 5 tandem repeats follow at residues 78–85, 86–93, 94–101, 102–109, and 110–117. In terms of domain architecture, VM spans 117 to 154; the sequence is SIPSPPCPKNYLFSCQPSLQPVPCSAPAQSYGSAGAYS. Positions 155 to 168 are cleaved as a propeptide — removed between stage 9 and 12 of oogenesis; the sequence is QYVPQYAVPFVREL.

The protein belongs to the vitelline membrane protein family. In terms of assembly, interacts with vml and Vm26Aa; forms part of a disulfide-linked network within the vitelline membrane of stage 10 egg chambers. Proteolytically processed after secretion into the perivitelline space. Undergoes several proteolytic processing steps during formation of the vitelline membrane; an initial processing step removing a C-terminal propeptide occurs between stage 9 and 12 of oogenesis while a second removing a N-terminal propeptide occurs between stage 11 and 14. Post-translationally, becomes part of a disulfide-linked network including other vitelline membrane proteins, including vml and Vm26Aa, during vitelline membrane biogenesis and maturation. Cys-123, Cys-131 and Cys-140 are involved in disulfide network formation, with Cys-131 being the most important. Undergoes both disulfide and non-disulfide cross-linking upon incorporation into the vitelline membrane. As to expression, follicle cells.

It is found in the secreted. The protein localises to the extracellular space. The protein resides in the extracellular matrix. In terms of biological role, major early eggshell protein secreted by follicle cells into the perivitelline space and incorporated into the vitelline membrane. Involved in vitelline membrane biogenesis; forms a cross-linked network with other vitelline membrane components. This chain is Vitelline membrane protein Vm26Ab, found in Drosophila melanogaster (Fruit fly).